We begin with the raw amino-acid sequence, 129 residues long: Large ribosomal subunit protein eL32 (129 aa).

This sequence belongs to the eukaryotic ribosomal protein eL32 family.

The protein is Large ribosomal subunit protein eL32 (rpl32e) of Archaeoglobus fulgidus (strain ATCC 49558 / DSM 4304 / JCM 9628 / NBRC 100126 / VC-16).